Consider the following 529-residue polypeptide: Tyrosine--tRNA ligase, cytoplasmic (529 aa).

L-tyrosine is bound at residue Tyr-39. The 'HIGH' region motif lies at Thr-44–Tyr-52. L-tyrosine contacts are provided by Tyr-166, Gln-170, Asp-173, and Gln-188. The short motif at Lys-222 to Ser-226 is the 'KMSKS' region element. Residues Lys-242–Lys-247 carry the Nuclear localization signal motif. The segment at Lys-335–Asp-362 is disordered. Positions Ile-365–Tyr-469 constitute a tRNA-binding domain.

It belongs to the class-I aminoacyl-tRNA synthetase family. As to quaternary structure, homodimer.

The protein resides in the cytoplasm. It is found in the nucleus. It catalyses the reaction tRNA(Tyr) + L-tyrosine + ATP = L-tyrosyl-tRNA(Tyr) + AMP + diphosphate + H(+). In terms of biological role, catalyzes the attachment of tyrosine to tRNA(Tyr) in a two-step reaction: tyrosine is first activated by ATP to form Tyr-AMP and then transferred to the acceptor end of tRNA(Tyr). The chain is Tyrosine--tRNA ligase, cytoplasmic (yars1) from Danio rerio (Zebrafish).